The chain runs to 323 residues: RNA polymerase sigma factor SigB (323 aa).

The sufficient to interact with RbpA stretch occupies residues 1–228; it reads MADAPTRATT…DMPVGSEEEA (228 aa). The segment at 25 to 59 is sigma-70 factor domain-1; that stretch reads DLVRVYLNGIGKTALLNAAGEVELAKRIEAGLYAE. The sigma-70 factor domain-2 stretch occupies residues 90–160; sequence LLEANLRLVV…TRGMADQSRT (71 aa). Residues 114 to 117 carry the Polymerase core binding motif; it reads DLIQ. The segment at 169-245 is sigma-70 factor domain-3; that stretch reads EQVNKLARIK…DAEAMSAENA (77 aa). Residues 258 to 311 are sigma-70 factor domain-4; sequence VLATLDEREHQVIRLRFGLDDGQPRTLDQIGKLFGLSRERVRQIERDVMSKLRH. Positions 284–303 form a DNA-binding region, H-T-H motif; it reads LDQIGKLFGLSRERVRQIER.

This sequence belongs to the sigma-70 factor family. Monomer. Interacts transiently with the RNA polymerase catalytic core formed by RpoA, RpoB, RpoC and RpoZ (2 alpha, 1 beta, 1 beta' and 1 omega subunit) to form the RNA polymerase holoenzyme that can initiate transcription.

Sigma factors are initiation factors that promote the attachment of RNA polymerase to specific initiation sites and are then released. A non-essential principal sigma factor that responds to cell envelope stress and hypoxia. The sequence is that of RNA polymerase sigma factor SigB (sigB) from Mycobacterium tuberculosis (strain CDC 1551 / Oshkosh).